Reading from the N-terminus, the 427-residue chain is Glutamate-1-semialdehyde 2,1-aminomutase (427 aa).

Lys267 bears the N6-(pyridoxal phosphate)lysine mark.

It belongs to the class-III pyridoxal-phosphate-dependent aminotransferase family. HemL subfamily. As to quaternary structure, homodimer. Requires pyridoxal 5'-phosphate as cofactor.

The protein localises to the cytoplasm. The catalysed reaction is (S)-4-amino-5-oxopentanoate = 5-aminolevulinate. Its pathway is porphyrin-containing compound metabolism; protoporphyrin-IX biosynthesis; 5-aminolevulinate from L-glutamyl-tRNA(Glu): step 2/2. This chain is Glutamate-1-semialdehyde 2,1-aminomutase, found in Citrifermentans bemidjiense (strain ATCC BAA-1014 / DSM 16622 / JCM 12645 / Bem) (Geobacter bemidjiensis).